Here is a 479-residue protein sequence, read N- to C-terminus: Endoglucanase 20 (479 aa).

An N-terminal signal peptide occupies residues 1 to 21; the sequence is MGKLLVLMLVGMFLAFESLEA. N29 carries N-linked (GlcNAc...) asparagine glycosylation. D76 acts as the Nucleophile in catalysis. Residue H398 is part of the active site. N442 carries N-linked (GlcNAc...) asparagine glycosylation. Active-site residues include D449 and E458.

The protein belongs to the glycosyl hydrolase 9 (cellulase E) family.

The protein localises to the secreted. The enzyme catalyses Endohydrolysis of (1-&gt;4)-beta-D-glucosidic linkages in cellulose, lichenin and cereal beta-D-glucans.. The chain is Endoglucanase 20 from Arabidopsis thaliana (Mouse-ear cress).